A 299-amino-acid chain; its full sequence is Protein phosphatase 1 regulatory subunit 3D (299 aa).

The disordered stretch occupies residues 1–22; it reads MSRGPSSAVLPSALGSRKLGPR. A phosphoserine mark is found at Ser23, Ser25, and Ser28. Positions 37–94 are disordered; it reads EPRACRPPGSPGRAPPPTPAPSGCDPRLRPIILRRARSLPSSPERRQKAAGAPGAACR. Residues 44–56 are compositionally biased toward pro residues; the sequence is PGSPGRAPPPTPA. The segment covering 57-67 has biased composition (low complexity); it reads PSGCDPRLRPI. Ser74 is modified (phosphoserine). Positions 85 to 94 are enriched in low complexity; it reads AAGAPGAACR. The PP1-binding motif motif lies at 101–104; the sequence is LRVR. Phosphoserine is present on Ser133. The region spanning 169–278 is the CBM21 domain; that stretch reads GERLQRQLVC…NNDHRDYSLT (110 aa).

Interacts with PPP1CC catalytic subunit of PP1, and associates with glycogen. Interacts with EPM2A; in the presence of NHLC1/malin the interaction leads to PPP1R3D ubiquitination and autophagic degradation. In terms of tissue distribution, expressed in all tissues tested. High expression in skeletal muscle and heart.

Its function is as follows. Seems to act as a glycogen-targeting subunit for PP1. PP1 is essential for cell division, and participates in the regulation of glycogen metabolism, muscle contractility and protein synthesis. This is Protein phosphatase 1 regulatory subunit 3D (PPP1R3D) from Homo sapiens (Human).